The chain runs to 215 residues: Pyrrolidone-carboxylate peptidase (215 aa).

Catalysis depends on residues glutamate 78, cysteine 141, and histidine 165.

This sequence belongs to the peptidase C15 family. Homotetramer.

The protein resides in the cytoplasm. It carries out the reaction Release of an N-terminal pyroglutamyl group from a polypeptide, the second amino acid generally not being Pro.. Its function is as follows. Removes 5-oxoproline from various penultimate amino acid residues except L-proline. The polypeptide is Pyrrolidone-carboxylate peptidase (Streptococcus pyogenes serotype M18 (strain MGAS8232)).